We begin with the raw amino-acid sequence, 141 residues long: Transmembrane protein 216 (141 aa).

Transmembrane regions (helical) follow at residues 15 to 35 (VLFF…LLIF), 49 to 69 (LVLD…RLFF), 82 to 102 (LGIS…YLLL), and 115 to 135 (SILL…LATF).

Part of the tectonic-like complex (also named B9 complex). Interacts with TMEM107.

It localises to the membrane. Its subcellular location is the cytoplasm. The protein resides in the cytoskeleton. It is found in the cilium basal body. In terms of biological role, part of the tectonic-like complex which is required for tissue-specific ciliogenesis and may regulate ciliary membrane composition. The polypeptide is Transmembrane protein 216 (Tmem216) (Mus musculus (Mouse)).